We begin with the raw amino-acid sequence, 311 residues long: HPr kinase/phosphorylase (311 aa).

Catalysis depends on residues His-138 and Lys-159. 153 to 160 provides a ligand contact to ATP; that stretch reads GDSGIGKS. Ser-160 lines the Mg(2+) pocket. Residue Asp-177 is the Proton acceptor; for phosphorylation activity. Proton donor; for dephosphorylation activity of the active site. Residues 201–210 are important for the catalytic mechanism of both phosphorylation and dephosphorylation; sequence LEIRGVGIID. Mg(2+) is bound at residue Glu-202. Arg-243 is a catalytic residue. Positions 264–269 are important for the catalytic mechanism of dephosphorylation; sequence PVKTGR.

Belongs to the HPrK/P family. Homohexamer. It depends on Mg(2+) as a cofactor.

It catalyses the reaction [HPr protein]-L-serine + ATP = [HPr protein]-O-phospho-L-serine + ADP + H(+). The enzyme catalyses [HPr protein]-O-phospho-L-serine + phosphate + H(+) = [HPr protein]-L-serine + diphosphate. Its function is as follows. Catalyzes the ATP- as well as the pyrophosphate-dependent phosphorylation of a specific serine residue in HPr, a phosphocarrier protein of the phosphoenolpyruvate-dependent sugar phosphotransferase system (PTS). HprK/P also catalyzes the pyrophosphate-producing, inorganic phosphate-dependent dephosphorylation (phosphorolysis) of seryl-phosphorylated HPr (P-Ser-HPr). The two antagonistic activities of HprK/P are regulated by several intracellular metabolites, which change their concentration in response to the absence or presence of rapidly metabolisable carbon sources (glucose, fructose, etc.) in the growth medium. Therefore, by controlling the phosphorylation state of HPr, HPrK/P is a sensor enzyme that plays a major role in the regulation of carbon metabolism and sugar transport: it mediates carbon catabolite repression (CCR), and regulates PTS-catalyzed carbohydrate uptake and inducer exclusion. This Streptococcus gordonii (strain Challis / ATCC 35105 / BCRC 15272 / CH1 / DL1 / V288) protein is HPr kinase/phosphorylase.